We begin with the raw amino-acid sequence, 341 residues long: Tetraacyldisaccharide 4'-kinase (341 aa).

65 to 72 (TVGGSGKT) lines the ATP pocket.

Belongs to the LpxK family.

The enzyme catalyses a lipid A disaccharide + ATP = a lipid IVA + ADP + H(+). It participates in glycolipid biosynthesis; lipid IV(A) biosynthesis; lipid IV(A) from (3R)-3-hydroxytetradecanoyl-[acyl-carrier-protein] and UDP-N-acetyl-alpha-D-glucosamine: step 6/6. Transfers the gamma-phosphate of ATP to the 4'-position of a tetraacyldisaccharide 1-phosphate intermediate (termed DS-1-P) to form tetraacyldisaccharide 1,4'-bis-phosphate (lipid IVA). The sequence is that of Tetraacyldisaccharide 4'-kinase from Shewanella woodyi (strain ATCC 51908 / MS32).